Reading from the N-terminus, the 185-residue chain is MISAGDLRKGTTFELDGQVYTVIDFLHVKPGKGAAFVRTKLRNVISGGVTETTFNPTAKLQEAVIERKEMQYLYSDGELYYFMDQETFEQIPLNFEQVENAIKFLKENMFAIIKFYKGAAFSVEAPNFVELQIVECEPGIKGNTATNAMKPAKLETGAVVNVPLFVNEGETIRVDTRTGDYMERV.

It belongs to the elongation factor P family.

It is found in the cytoplasm. The protein operates within protein biosynthesis; polypeptide chain elongation. Its function is as follows. Involved in peptide bond synthesis. Stimulates efficient translation and peptide-bond synthesis on native or reconstituted 70S ribosomes in vitro. Probably functions indirectly by altering the affinity of the ribosome for aminoacyl-tRNA, thus increasing their reactivity as acceptors for peptidyl transferase. The sequence is that of Elongation factor P from Clostridium novyi (strain NT).